The chain runs to 93 residues: UPF0358 protein BH2626 (93 aa).

The protein belongs to the UPF0358 family.

This Halalkalibacterium halodurans (strain ATCC BAA-125 / DSM 18197 / FERM 7344 / JCM 9153 / C-125) (Bacillus halodurans) protein is UPF0358 protein BH2626.